Here is a 296-residue protein sequence, read N- to C-terminus: Ribosomal RNA small subunit methyltransferase H (296 aa).

S-adenosyl-L-methionine contacts are provided by residues 41–43 (GGY), Asp59, Phe86, Asp104, and Gln111.

The protein belongs to the methyltransferase superfamily. RsmH family.

The protein resides in the cytoplasm. The enzyme catalyses cytidine(1402) in 16S rRNA + S-adenosyl-L-methionine = N(4)-methylcytidine(1402) in 16S rRNA + S-adenosyl-L-homocysteine + H(+). Its function is as follows. Specifically methylates the N4 position of cytidine in position 1402 (C1402) of 16S rRNA. This chain is Ribosomal RNA small subunit methyltransferase H, found in Neorickettsia sennetsu (strain ATCC VR-367 / Miyayama) (Ehrlichia sennetsu).